Consider the following 253-residue polypeptide: Eukaryotic initiation factor 4A-6 (253 aa).

A Helicase ATP-binding domain is found at 1–82; that stretch reads HVVVGTPGRV…RKFMNKPVRI (82 aa). A DEAD box motif is present at residues 30–33; the sequence is DEAD. One can recognise a Helicase C-terminal domain in the interval 93–253; the sequence is GIKQFYVNVD…EELPANVADL (161 aa).

Belongs to the DEAD box helicase family. eIF4A subfamily. In terms of assembly, eIF4F is a multi-subunit complex, the composition of which varies with external and internal environmental conditions. It is composed of at least EIF4A, EIF4E and EIF4G.

It catalyses the reaction ATP + H2O = ADP + phosphate + H(+). Functionally, ATP-dependent RNA helicase which is a subunit of the eIF4F complex involved in cap recognition and is required for mRNA binding to ribosome. In the current model of translation initiation, eIF4A unwinds RNA secondary structures in the 5'-UTR of mRNAs which is necessary to allow efficient binding of the small ribosomal subunit, and subsequent scanning for the initiator codon. The polypeptide is Eukaryotic initiation factor 4A-6 (Nicotiana tabacum (Common tobacco)).